The primary structure comprises 63 residues: Large ribosomal subunit protein uL30 (63 aa).

The protein belongs to the universal ribosomal protein uL30 family. Part of the 50S ribosomal subunit.

This Rickettsia massiliae (strain Mtu5) protein is Large ribosomal subunit protein uL30.